A 243-amino-acid chain; its full sequence is Venom nerve growth factor (243 aa).

The N-terminal stretch at 1-18 is a signal peptide; it reads MSMLCYTLIIVFLIGIWA. Positions 19–125 are excised as a propeptide; it reads APKSEDNVPL…TLNRNIRAKR (107 aa). Residues 47–66 show a composition bias toward basic and acidic residues; the sequence is GLKTSRNTDQRHPAPKKAED. Residues 47–69 form a disordered region; the sequence is GLKTSRNTDQRHPAPKKAEDQEL. 3 cysteine pairs are disulfide-bonded: C139–C204, C182–C232, and C192–C234. An N-linked (GlcNAc...) asparagine glycan is attached at N148.

This sequence belongs to the NGF-beta family. In terms of assembly, homodimer; non-covalently linked. Expressed by the venom gland.

The protein localises to the secreted. In terms of biological role, nerve growth factor is important for the development and maintenance of the sympathetic and sensory nervous systems. It stimulates division and differentiation of sympathetic and embryonic sensory neurons as well as basal forebrain cholinergic neurons in the brain. Its relevance in the snake venom is not clear. However, it has been shown to inhibit metalloproteinase-dependent proteolysis of platelet glycoprotein Ib alpha, suggesting a metalloproteinase inhibition to prevent metalloprotease autodigestion and/or protection against prey proteases. Binds a lipid between the two protein chains in the homodimer. The lipid-bound form promotes histamine relase from mouse mast cells, contrary to the lipid-free form. The sequence is that of Venom nerve growth factor from Oxyuranus scutellatus scutellatus (Australian taipan).